A 726-amino-acid polypeptide reads, in one-letter code: Catalase-peroxidase (726 aa).

The interval 1–33 is disordered; sequence MSTTDDTHNTLSTGKCPFHQGGHDRSAGAGTAS. Residues 105–226 constitute a cross-link (tryptophyl-tyrosyl-methioninium (Trp-Tyr) (with M-252)); that stretch reads WHGAGTYRSI…LGATEMGLIY (122 aa). His-106 acts as the Proton acceptor in catalysis. A cross-link (tryptophyl-tyrosyl-methioninium (Tyr-Met) (with W-105)) is located at residues 226–252; it reads YVNPEGPDHSGEPLSAAAAIRATFGNM. A heme b-binding site is contributed by His-267.

It belongs to the peroxidase family. Peroxidase/catalase subfamily. As to quaternary structure, homodimer or homotetramer. Requires heme b as cofactor. Post-translationally, formation of the three residue Trp-Tyr-Met cross-link is important for the catalase, but not the peroxidase activity of the enzyme.

It catalyses the reaction H2O2 + AH2 = A + 2 H2O. The enzyme catalyses 2 H2O2 = O2 + 2 H2O. Functionally, bifunctional enzyme with both catalase and broad-spectrum peroxidase activity. This chain is Catalase-peroxidase, found in Salmonella heidelberg (strain SL476).